Here is a 163-residue protein sequence, read N- to C-terminus: Phosphopantetheine adenylyltransferase (163 aa).

Serine 8 contacts substrate. ATP is bound by residues 8 to 9 and histidine 16; that span reads SF. Substrate contacts are provided by lysine 40, threonine 72, and arginine 86. Residues 87–89, glutamate 97, and 122–128 each bind ATP; these read GLR and HSFLSSS.

This sequence belongs to the bacterial CoaD family. As to quaternary structure, homohexamer. Mg(2+) is required as a cofactor.

It is found in the cytoplasm. The catalysed reaction is (R)-4'-phosphopantetheine + ATP + H(+) = 3'-dephospho-CoA + diphosphate. The protein operates within cofactor biosynthesis; coenzyme A biosynthesis; CoA from (R)-pantothenate: step 4/5. Its function is as follows. Reversibly transfers an adenylyl group from ATP to 4'-phosphopantetheine, yielding dephospho-CoA (dPCoA) and pyrophosphate. The chain is Phosphopantetheine adenylyltransferase from Synechococcus sp. (strain CC9902).